Reading from the N-terminus, the 426-residue chain is Phosphoribosylamine--glycine ligase (426 aa).

Positions lysine 107–asparagine 313 constitute an ATP-grasp domain. Residue leucine 133 to serine 194 participates in ATP binding. 2 residues coordinate Mg(2+): glutamate 283 and asparagine 285.

Belongs to the GARS family. Mg(2+) is required as a cofactor. It depends on Mn(2+) as a cofactor.

The catalysed reaction is 5-phospho-beta-D-ribosylamine + glycine + ATP = N(1)-(5-phospho-beta-D-ribosyl)glycinamide + ADP + phosphate + H(+). It functions in the pathway purine metabolism; IMP biosynthesis via de novo pathway; N(1)-(5-phospho-D-ribosyl)glycinamide from 5-phospho-alpha-D-ribose 1-diphosphate: step 2/2. This chain is Phosphoribosylamine--glycine ligase, found in Fusobacterium nucleatum subsp. nucleatum (strain ATCC 25586 / DSM 15643 / BCRC 10681 / CIP 101130 / JCM 8532 / KCTC 2640 / LMG 13131 / VPI 4355).